A 415-amino-acid chain; its full sequence is Probable G-protein coupled receptor 19 (415 aa).

Residues 1–69 are Extracellular-facing; the sequence is MVFAHRMDNS…LKPGEVATAS (69 aa). 2 N-linked (GlcNAc...) asparagine glycosylation sites follow: Asn-25 and Asn-52. Residues 70-90 traverse the membrane as a helical segment; it reads IFFGILWLFSIFGNSLVCLVI. Residues 91–102 are Cytoplasmic-facing; it reads HRSRRTQSTTNY. A helical transmembrane segment spans residues 103–123; it reads FVVSMACADLLISVASTPFVL. At 124 to 143 the chain is on the extracellular side; that stretch reads LQFTTGRWTLGSATCKVVRY. An intrachain disulfide couples Cys-138 to Cys-210. A helical transmembrane segment spans residues 144-161; the sequence is FQYLTPGVQIYVLLSICI. The Cytoplasmic portion of the chain corresponds to 162-182; that stretch reads DRFYTIVYPLSFKVSREKAKK. A helical transmembrane segment spans residues 183-203; the sequence is MIAASWVFDAGFVTPVLFFYG. At 204-221 the chain is on the extracellular side; the sequence is SNWDSHCNYFLPSSWEGT. A helical transmembrane segment spans residues 222–242; the sequence is AYTVIHFLVGFVIPSVLIILF. The Cytoplasmic portion of the chain corresponds to 243 to 277; that stretch reads YQKVIKYIWRIGTDGRTVRRTMNIVPRTKVKTIKM. A helical transmembrane segment spans residues 278 to 298; the sequence is FLILNLLFLLSWLPFHVAQLW. Over 299-309 the chain is Extracellular; that stretch reads HPHEQDYKKSS. The helical transmembrane segment at 310-325 threads the bilayer; the sequence is LVFTAITWISFSSSAS. The Cytoplasmic portion of the chain corresponds to 326 to 415; the sequence is KPTLYSIYNA…INSNPPNTFV (90 aa).

It belongs to the G-protein coupled receptor 1 family. As to expression, abundant expression in the brain.

It localises to the cell membrane. Functionally, G-protein coupled receptor that plays a role in the regulation of circadian rhythms and energy metabolism. Participates in maintaining proper circadian gene expression in the suprachiasmatic nucleus (SCN), the locus of the master circadian clock in the brain. May function as a coordinator of aging-associated metabolic dysfunction, stress response, DNA integrity management, and eventual senescence. Upon binding to adropin, modulates mitochondrial energy metabolism via the p44/42-PDK4 signaling pathway, influencing pyruvate dehydrogenase activity. This chain is Probable G-protein coupled receptor 19 (GPR19), found in Homo sapiens (Human).